The primary structure comprises 188 residues: MSSLEISSSCFSLETKLPLSPPLVEDSAFEPSRKDMDEVEEKSKDVINFTAEKLSVDEVSQLVISPLCGAISLFVGTTRNNFEGKKVISLEYEAYLPMAENEVRKICSDIRQKWPVKHIAVFHRLGLVPVSEASIIIAVSSAHRAASLEAVSYAIDTLKAKVPIWKKEIYEESSTWKGNKECFWASNS.

Ser20 carries the post-translational modification Phosphoserine. Substrate contacts are provided by residues 143–144 (HR), Lys159, and 166–168 (KKE).

Belongs to the MoaE family. MOCS2B subfamily. In terms of assembly, heterotetramer; composed of 2 small (MOCS2A) and 2 large (MOCS2B) subunits. As to expression, highest levels are found in heart and skeletal muscle. Lower levels are present in brain, kidney and pancreas. Very low levels are found in lung and peripheral blood leukocytes.

The protein resides in the cytoplasm. It is found in the cytosol. The enzyme catalyses 2 [molybdopterin-synthase sulfur-carrier protein]-C-terminal-Gly-aminoethanethioate + cyclic pyranopterin phosphate + H2O = molybdopterin + 2 [molybdopterin-synthase sulfur-carrier protein]-C-terminal Gly-Gly + 2 H(+). It functions in the pathway cofactor biosynthesis; molybdopterin biosynthesis. Its function is as follows. Catalytic subunit of the molybdopterin synthase complex, a complex that catalyzes the conversion of precursor Z into molybdopterin. Acts by mediating the incorporation of 2 sulfur atoms from thiocarboxylated MOCS2A into precursor Z to generate a dithiolene group. The protein is Molybdopterin synthase catalytic subunit of Homo sapiens (Human).